The following is a 59-amino-acid chain: Cytochrome c oxidase subunit 7 (59 aa).

Residues 1–24 are Mitochondrial matrix-facing; sequence MKNTIVQQQRFLQSIHKPTYLQRP. Residues 25–47 form a helical membrane-spanning segment; the sequence is GSFALVYPYYAVMAGLGLYSLYA. The Mitochondrial intermembrane segment spans residues 48-59; it reads SGRVIFGKKDAF.

Belongs to the cytochrome c oxidase subunit 7 family. In terms of assembly, component of the cytochrome c oxidase (complex IV, CIV), a multisubunit enzyme composed of a catalytic core of 3 subunits and several supernumerary subunits. The complex exists as a monomer or a dimer and forms supercomplexes (SCs) in the inner mitochondrial membrane with ubiquinol-cytochrome c oxidoreductase (cytochrome b-c1 complex, complex III, CIII).

The protein resides in the mitochondrion inner membrane. Its pathway is energy metabolism; oxidative phosphorylation. Functionally, component of the cytochrome c oxidase, the last enzyme in the mitochondrial electron transport chain which drives oxidative phosphorylation. The respiratory chain contains 3 multisubunit complexes succinate dehydrogenase (complex II, CII), ubiquinol-cytochrome c oxidoreductase (cytochrome b-c1 complex, complex III, CIII) and cytochrome c oxidase (complex IV, CIV), that cooperate to transfer electrons derived from NADH and succinate to molecular oxygen, creating an electrochemical gradient over the inner membrane that drives transmembrane transport and the ATP synthase. Cytochrome c oxidase is the component of the respiratory chain that catalyzes the reduction of oxygen to water. Electrons originating from reduced cytochrome c in the intermembrane space (IMS) are transferred via the dinuclear copper A center (CU(A)) of subunit 2 and heme A of subunit 1 to the active site in subunit 1, a binuclear center (BNC) formed by heme A3 and copper B (CU(B)). The BNC reduces molecular oxygen to 2 water molecules using 4 electrons from cytochrome c in the IMS and 4 protons from the mitochondrial matrix. In Schizosaccharomyces pombe (strain 972 / ATCC 24843) (Fission yeast), this protein is Cytochrome c oxidase subunit 7 (cox7).